A 459-amino-acid polypeptide reads, in one-letter code: Ribulose bisphosphate carboxylase (459 aa).

Asparagine 111 serves as a coordination point for substrate. Residue lysine 166 is the Proton acceptor of the active site. Residue lysine 168 participates in substrate binding. The Mg(2+) site is built by lysine 191, aspartate 193, and glutamate 194. N6-carboxylysine is present on lysine 191. Histidine 287 serves as the catalytic Proton acceptor. Positions 288, 321, and 368 each coordinate substrate.

Belongs to the RuBisCO large chain family. Type II subfamily. In terms of assembly, homodimer. The cofactor is Mg(2+).

It carries out the reaction 2 (2R)-3-phosphoglycerate + 2 H(+) = D-ribulose 1,5-bisphosphate + CO2 + H2O. The catalysed reaction is D-ribulose 1,5-bisphosphate + O2 = 2-phosphoglycolate + (2R)-3-phosphoglycerate + 2 H(+). Functionally, ruBisCO catalyzes two reactions: the carboxylation of D-ribulose 1,5-bisphosphate, the primary event in carbon dioxide fixation, as well as the oxidative fragmentation of the pentose substrate. Both reactions occur simultaneously and in competition at the same active site. The polypeptide is Ribulose bisphosphate carboxylase (Paramagnetospirillum magnetotacticum (Aquaspirillum magnetotacticum)).